Here is a 181-residue protein sequence, read N- to C-terminus: Probable inactive acireductone dioxygenase 2 (181 aa).

Belongs to the acireductone dioxygenase (ARD) family.

It localises to the cytoplasm. The protein localises to the nucleus. In terms of biological role, probable inactive acireductone dioxygenase. This Sorghum bicolor (Sorghum) protein is Probable inactive acireductone dioxygenase 2.